The sequence spans 500 residues: NAD(P)H-quinone oxidoreductase chain 4, chloroplastic (500 aa).

The next 13 helical transmembrane spans lie at 4 to 24, 35 to 55, 87 to 107, 134 to 154, 167 to 187, 211 to 231, 242 to 262, 272 to 292, 305 to 325, 330 to 350, 386 to 406, 416 to 436, and 462 to 482; these read FPWLTIIVVFPISAGSLMLFL, YTISICILELLLTTYAFCYNF, IGTILLTGFITTLATLAAFPV, LLLFFIMWELELIPVYHLLSM, FILYTAGSSIFLLIGVLGISL, ILFYIGFLIAFAVKSPIIPLH, HYSTCMLLAGILLKMGAYGLV, AHSMFSPWLMVVGTIQIIYAA, IAYSSVSHMGFIIIGISSITD, GAILQIISHGFIGAALFFLAG, LALPGMSGFVAELIVFFGIIT, IFIIFVMAIGMILTPIYLLSM, and LFLSISILLPIIGIGIYPDFV.

The protein belongs to the complex I subunit 4 family.

The protein resides in the plastid. The protein localises to the chloroplast thylakoid membrane. The catalysed reaction is a plastoquinone + NADH + (n+1) H(+)(in) = a plastoquinol + NAD(+) + n H(+)(out). It carries out the reaction a plastoquinone + NADPH + (n+1) H(+)(in) = a plastoquinol + NADP(+) + n H(+)(out). The polypeptide is NAD(P)H-quinone oxidoreductase chain 4, chloroplastic (Crucihimalaya wallichii (Rock-cress)).